Consider the following 107-residue polypeptide: MQFSTTPTLEGLTIVEYCGVVTGEAILGANIFRDFFAGIRDIVGGRSGAYEKELRKAREIAFEELGSQARALGADAVVGIDIDYETVGQNGSMLMVSVSGTAVKTRR.

It belongs to the UPF0145 family.

The protein is UPF0145 protein YbjQ of Shigella flexneri.